A 475-amino-acid polypeptide reads, in one-letter code: Cytosolic enolase 3 (475 aa).

The residue at position 2 (S2) is an N-acetylserine. Residues H200 and E209 each contribute to the substrate site. The active-site Proton donor is the D252. Mg(2+) contacts are provided by D287, E336, and D361. Positions 336 and 361 each coordinate substrate. The active-site Proton acceptor is K386. Substrate-binding positions include 413–416 and K437; that span reads SHRC.

This sequence belongs to the enolase family. As to quaternary structure, homodimer. The cofactor is Mg(2+).

The protein resides in the cytoplasm. It is found in the nucleus. It catalyses the reaction (2R)-2-phosphoglycerate = phosphoenolpyruvate + H2O. Its pathway is carbohydrate degradation; glycolysis; pyruvate from D-glyceraldehyde 3-phosphate: step 4/5. This Arabidopsis thaliana (Mouse-ear cress) protein is Cytosolic enolase 3 (ENO3).